The primary structure comprises 586 residues: Phosphomethylpyrimidine synthase (586 aa).

The segment at 1 to 58 is disordered; sequence MKQSVSAEQIELKSSLPGSKKVYVDGTREGMKVPMREIEQSDTNGVQNPPIRVYDTSG. Positions 22 to 39 are enriched in basic and acidic residues; sequence VYVDGTREGMKVPMREIE. Substrate-binding positions include asparagine 193, methionine 222, tyrosine 251, histidine 287, 307–309, 348–351, and glutamate 387; these read SRG and DGLR. Residue histidine 391 coordinates Zn(2+). Tyrosine 414 serves as a coordination point for substrate. Residue histidine 455 coordinates Zn(2+). [4Fe-4S] cluster contacts are provided by cysteine 535, cysteine 538, and cysteine 543.

It belongs to the ThiC family. [4Fe-4S] cluster is required as a cofactor.

The catalysed reaction is 5-amino-1-(5-phospho-beta-D-ribosyl)imidazole + S-adenosyl-L-methionine = 4-amino-2-methyl-5-(phosphooxymethyl)pyrimidine + CO + 5'-deoxyadenosine + formate + L-methionine + 3 H(+). It participates in cofactor biosynthesis; thiamine diphosphate biosynthesis. Catalyzes the synthesis of the hydroxymethylpyrimidine phosphate (HMP-P) moiety of thiamine from aminoimidazole ribotide (AIR) in a radical S-adenosyl-L-methionine (SAM)-dependent reaction. This is Phosphomethylpyrimidine synthase from Bacillus mycoides (strain KBAB4) (Bacillus weihenstephanensis).